The following is a 68-amino-acid chain: Large ribosomal subunit protein uL29 (68 aa).

The protein belongs to the universal ribosomal protein uL29 family.

In Archaeoglobus fulgidus (strain ATCC 49558 / DSM 4304 / JCM 9628 / NBRC 100126 / VC-16), this protein is Large ribosomal subunit protein uL29 (rpl29).